Reading from the N-terminus, the 160-residue chain is Cytochrome b6-f complex subunit 4 (160 aa).

The next 3 helical transmembrane spans lie at 36–56 (LLYIFPVVILGTIACVVGLAV), 95–115 (LLGIALQTLIPLGLMILPFIE), and 131–151 (VVFLFGTFLTIYLGIGACLPI).

Belongs to the cytochrome b family. PetD subfamily. As to quaternary structure, the 4 large subunits of the cytochrome b6-f complex are cytochrome b6, subunit IV (17 kDa polypeptide, PetD), cytochrome f and the Rieske protein, while the 4 small subunits are PetG, PetL, PetM and PetN. The complex functions as a dimer.

It is found in the cellular thylakoid membrane. In terms of biological role, component of the cytochrome b6-f complex, which mediates electron transfer between photosystem II (PSII) and photosystem I (PSI), cyclic electron flow around PSI, and state transitions. In Prochlorococcus marinus (strain MIT 9515), this protein is Cytochrome b6-f complex subunit 4.